The sequence spans 159 residues: Small ribosomal subunit protein uS7c (159 aa).

The protein belongs to the universal ribosomal protein uS7 family. In terms of assembly, part of the 30S ribosomal subunit.

The protein localises to the plastid. It localises to the chloroplast. Its function is as follows. One of the primary rRNA binding proteins, it binds directly to 16S rRNA where it nucleates assembly of the head domain of the 30S subunit. The protein is Small ribosomal subunit protein uS7c (rps7) of Bigelowiella natans (Pedinomonas minutissima).